The chain runs to 804 residues: Probable replication endonuclease from prophage-like region 2 (804 aa).

Catalysis depends on O-(5'-phospho-DNA)-tyrosine intermediate residues Y503 and Y507.

It belongs to the phage GPA family.

Possible endonuclease which induces a single-strand cut and initiates DNA replication. This Salmonella typhi protein is Probable replication endonuclease from prophage-like region 2.